The sequence spans 98 residues: MSAKAEHYDVIRKPIITEKSTMASENGAVVFEVAIDSNKPQIKEAVEALFGVKVKAVNTTVTKGKVKRFRGQLGKRKDVKKAYVTLEEGNTIDVSTGL.

The protein belongs to the universal ribosomal protein uL23 family. Part of the 50S ribosomal subunit. Contacts protein L29, and trigger factor when it is bound to the ribosome.

One of the early assembly proteins it binds 23S rRNA. One of the proteins that surrounds the polypeptide exit tunnel on the outside of the ribosome. Forms the main docking site for trigger factor binding to the ribosome. The sequence is that of Large ribosomal subunit protein uL23 from Ruegeria sp. (strain TM1040) (Silicibacter sp.).